The primary structure comprises 239 residues: Probable transcriptional regulatory protein lmo0369 (239 aa).

Belongs to the TACO1 family. YeeN subfamily.

Its subcellular location is the cytoplasm. The sequence is that of Probable transcriptional regulatory protein lmo0369 from Listeria monocytogenes serovar 1/2a (strain ATCC BAA-679 / EGD-e).